We begin with the raw amino-acid sequence, 147 residues long: MKVILLKDVKSLGKKGDLVNASDGYARNYLIPKKLAEQATENNVHILNNKKEAERRQKLKELEEAQKLAKSLMGKEIKFKVKIGENGRLFGSITSKDISEKLKEQYNMNIDKKKIVAETIRQTGVYEAEIKIYPEVSTKVKVSVLEE.

The protein belongs to the bacterial ribosomal protein bL9 family.

Functionally, binds to the 23S rRNA. This chain is Large ribosomal subunit protein bL9, found in Clostridium botulinum (strain ATCC 19397 / Type A).